The following is a 1877-amino-acid chain: Protein TIC 214 (1877 aa).

6 consecutive transmembrane segments (helical) span residues 18 to 38, 64 to 84, 87 to 107, 124 to 144, 172 to 192, and 221 to 241; these read IINSVVVVGLYYGFLTTFSVG, FITGQLMMFISIYYAPLHLAL, PHTITVLVLPYLLFHFFWKNH, LSIQCVFLNNLIFQLFNHFIL, VGWLIGHILFMKWVGLVLFWI, and IFRILLFITCVYYLGRIPSPI. 3 disordered regions span residues 246–313, 644–695, and 774–795; these read LKET…GKEK, DDFE…NSDR, and PEFKTSDSEEKEAKEEEKQKKE. 3 stretches are compositionally biased toward acidic residues: residues 251 to 268, 281 to 304, and 645 to 659; these read ETEEGGESEEETDVEIET, GSTEEDPSLCSEEKEDPDKIDETE, and DFEEQEEEDEEESTE. The segment covering 685-695 has biased composition (basic and acidic residues); sequence TSTKDTTNSDR.

This sequence belongs to the TIC214 family. Part of the Tic complex.

The protein resides in the plastid. Its subcellular location is the chloroplast inner membrane. Its function is as follows. Involved in protein precursor import into chloroplasts. May be part of an intermediate translocation complex acting as a protein-conducting channel at the inner envelope. This is Protein TIC 214 from Chloranthus spicatus (Chulantree).